We begin with the raw amino-acid sequence, 275 residues long: Seminase (275 aa).

Positions 1 to 19 are cleaved as a signal peptide; sequence MKRLLFLFLLAGILINNHA. Residue Asn23 is glycosylated (N-linked (GlcNAc...) asparagine). The Peptidase S1 domain occupies 44–268; it reads VIGGRVTTNA…VKPFIVKGIK (225 aa). Cys70 and Cys86 are disulfide-bonded. Residues His85 and Asp131 each act as charge relay system in the active site. Disulfide bonds link Cys194/Cys210 and Cys220/Cys244. Ser224 serves as the catalytic Charge relay system.

It belongs to the peptidase S1 family. In terms of processing, undergoes cleavage in the male during mating with a cleaved product detected in the ejaculatory duct and/or bulb of males by 8-10 minutes after the start of mating. Further cleavage occurs in the mated female. Produced in the male accessory glands and secreted into seminal fluid.

The protein resides in the secreted. In terms of biological role, seminal fluid protease which is required for cleavage and probably also activation of the metalloprotease Semp1. Also required for a number of female post-mating responses independent of Semp1 including egg laying and sperm usage. This is Seminase from Drosophila melanogaster (Fruit fly).